Here is a 130-residue protein sequence, read N- to C-terminus: Small ribosomal subunit protein uS11c (130 aa).

The protein belongs to the universal ribosomal protein uS11 family. In terms of assembly, part of the 30S ribosomal subunit.

It is found in the plastid. The protein resides in the chloroplast. This is Small ribosomal subunit protein uS11c from Nephroselmis olivacea (Green alga).